A 210-amino-acid chain; its full sequence is uncharacterized protein (210 aa).

Helical transmembrane passes span Trp9–Lys29, Leu35–Pro55, Gly64–Val84, Gly91–Asn111, Ile149–Trp169, and Ile190–Val210.

It is found in the cell membrane. This is an uncharacterized protein from Mycobacterium bovis (strain ATCC BAA-935 / AF2122/97).